A 111-amino-acid polypeptide reads, in one-letter code: uncharacterized protein (111 aa).

A helical transmembrane segment spans residues 20 to 39; sequence PVDTTGLIFFAVFASSFVLY.

The protein localises to the membrane. This is an uncharacterized protein from Saccharomyces cerevisiae (strain ATCC 204508 / S288c) (Baker's yeast).